The chain runs to 238 residues: Probable transcriptional regulatory protein YeeN (238 aa).

It belongs to the TACO1 family. YeeN subfamily.

Its subcellular location is the cytoplasm. The chain is Probable transcriptional regulatory protein YeeN from Escherichia coli (strain UTI89 / UPEC).